A 40-amino-acid chain; its full sequence is Sulfur globule protein TR0 (40 aa).

This sequence to C.vinosum CV1 and CV2. As to quaternary structure, the protein envelope of the sulfur globules is composed of the three different proteins TR0, TR1 and TR2.

Structural protein of the sulfur globules, which are intracellular globules that serve for sulfur storage in purple sulfur bacteria. This chain is Sulfur globule protein TR0, found in Thiocapsa roseopersicina.